Consider the following 212-residue polypeptide: Prolactin (212 aa).

The first 26 residues, 1–26, serve as a signal peptide directing secretion; the sequence is MARCCKCPRLHLAVTVLACVLVFTEG. Cystine bridges form between Cys-71–Cys-185 and Cys-202–Cys-212.

This sequence belongs to the somatotropin/prolactin family. In terms of tissue distribution, pituitary gland.

It is found in the secreted. The polypeptide is Prolactin (prl) (Ictalurus punctatus (Channel catfish)).